A 58-amino-acid chain; its full sequence is Succinate dehydrogenase subunit 8B, mitochondrial (58 aa).

Component of complex II composed of eight subunits in plants: four classical SDH subunits SDH1, SDH2, SDH3 and SDH4 (a flavoprotein (FP), an iron-sulfur protein (IP), and a cytochrome b composed of a large and a small subunit.), as well as four subunits unknown in mitochondria from bacteria and heterotrophic eukaryotes.

Its subcellular location is the mitochondrion inner membrane. The protein operates within carbohydrate metabolism; tricarboxylic acid cycle. This is Succinate dehydrogenase subunit 8B, mitochondrial from Oryza sativa subsp. japonica (Rice).